A 209-amino-acid chain; its full sequence is NADH-quinone oxidoreductase subunit C (209 aa).

This sequence belongs to the complex I 30 kDa subunit family. In terms of assembly, NDH-1 is composed of 14 different subunits. Subunits NuoB, C, D, E, F, and G constitute the peripheral sector of the complex.

Its subcellular location is the cell inner membrane. The catalysed reaction is a quinone + NADH + 5 H(+)(in) = a quinol + NAD(+) + 4 H(+)(out). Its function is as follows. NDH-1 shuttles electrons from NADH, via FMN and iron-sulfur (Fe-S) centers, to quinones in the respiratory chain. The immediate electron acceptor for the enzyme in this species is believed to be ubiquinone. Couples the redox reaction to proton translocation (for every two electrons transferred, four hydrogen ions are translocated across the cytoplasmic membrane), and thus conserves the redox energy in a proton gradient. This Xanthobacter autotrophicus (strain ATCC BAA-1158 / Py2) protein is NADH-quinone oxidoreductase subunit C.